The following is a 401-amino-acid chain: MYVVESKAGAIGCMILSLCCLGSWPAILTLLERRGRLPQHTFLDFATANLLAAIVIAFSLGEIGKSTFLKPDFTTQLPQDNWPSVLLAVAGGVLLSIGNLATQYAFAFVGLSVTEVITASITVVIGTTLNYFLDNKINKAEILFPGVGCFLIAVFLGAAVHASNAADVKEKLKSLPSEDLYSSIENGEDKPEIEKTDVESQEKLAEKAKAGTAGFYVELENKRAIKVFGKSIMIGLFITLFAGISLSLFSPAFNLATNDQWSTLPKGVPKLVVYTAFFYFSIAGFLISLILNLIFLYRPMVGLARSSLKKYIYDSKGRGWAVFAGFLCGFGNGLQFMGGQAAGYAAADSVQALPLVSTFWGIVLFGEYRKSSKRTYALLVSMLAMFVAAVAILMASSGHRK.

Topologically, residues 1–10 (MYVVESKAGA) are extracellular. Residues 11–31 (IGCMILSLCCLGSWPAILTLL) traverse the membrane as a helical segment. The Cytoplasmic portion of the chain corresponds to 32–40 (ERRGRLPQH). Residues 41 to 61 (TFLDFATANLLAAIVIAFSLG) traverse the membrane as a helical segment. Residues 62-81 (EIGKSTFLKPDFTTQLPQDN) lie on the Extracellular side of the membrane. The chain crosses the membrane as a helical span at residues 82-102 (WPSVLLAVAGGVLLSIGNLAT). The Cytoplasmic segment spans residues 103–104 (QY). Residues 105–125 (AFAFVGLSVTEVITASITVVI) form a helical membrane-spanning segment. At 126–141 (GTTLNYFLDNKINKAE) the chain is on the extracellular side. Residues 142-162 (ILFPGVGCFLIAVFLGAAVHA) form a helical membrane-spanning segment. At 163 to 231 (SNAADVKEKL…KRAIKVFGKS (69 aa)) the chain is on the cytoplasmic side. 224–231 (AIKVFGKS) provides a ligand contact to ATP. A helical membrane pass occupies residues 232-252 (IMIGLFITLFAGISLSLFSPA). The Extracellular segment spans residues 253–275 (FNLATNDQWSTLPKGVPKLVVYT). Residues 276-296 (AFFYFSIAGFLISLILNLIFL) traverse the membrane as a helical segment. Topologically, residues 297 to 318 (YRPMVGLARSSLKKYIYDSKGR) are cytoplasmic. A helical transmembrane segment spans residues 319-339 (GWAVFAGFLCGFGNGLQFMGG). Over 340-344 (QAAGY) the chain is Extracellular. A helical membrane pass occupies residues 345–365 (AAADSVQALPLVSTFWGIVLF). At 366–374 (GEYRKSSKR) the chain is on the cytoplasmic side. A helical transmembrane segment spans residues 375–395 (TYALLVSMLAMFVAAVAILMA). The Extracellular segment spans residues 396-401 (SSGHRK).

This sequence belongs to the plant ureide permease (TC 2.A.7.19) family. In terms of tissue distribution, expressed in developing seedlings, flower filaments and stigma, and the top and bottom parts of carpels in siliques.

The protein resides in the membrane. Functionally, proton-coupled transporter that transports a wide spectrum of oxo derivatives of heterocyclic nitrogen compounds. The sequence is that of Ureide permease 4 from Arabidopsis thaliana (Mouse-ear cress).